We begin with the raw amino-acid sequence, 558 residues long: MGSHMVWFLFLVSFFSVFPAPSESMVRHYKFNVVMKNVTRLCSSKPTVTVNGRYPGPTIYAREDDTLLIKVVNHVKYNVSIHWHGVRQVRTGWADGPAYITQCPIQPGQVYTYNYTLTGQRGTLWWHAHILWLRATVYGALVILPKRGVPYPFPKPDNEKVIVLGEWWKSDTENIINEALKSGLAPNVSDSHMINGHPGPVRNCPSQGYKLSVENGKTYLLRLVNAALNEELFFKVAGHIFTVVEVDAVYVKPFKTDTVLIAPGQTTNVLLTASKSAGKYLVTASPFMDAPIAVDNVTATATVHYSGTLSSSPTILTLPPPQNATSIANNFTNSLRSLNSKKYPALVPTTIDHHLFFTVGLGLNACPTCKAGNGSRVVASINNVTFIMPKTALLPAHYFNTSGVFTTDFPKNPPHVFNYSGGSVTNMATETGTRLYKLPYNATVQLVLQDTGVIAPENHPVHLHGFNFFEVGRGLGNFNSTKDPKNFNLVDPVERNTIGVPSGGWVVIRFRADNPGVWFMHCHLEVHTTWGLKMAFLVENGKGPNQSILPPPKDLPKC.

A signal peptide spans methionine 1–serine 24. Plastocyanin-like domains are found at residues asparagine 32–glycine 148 and asparagine 158–threonine 308. N-linked (GlcNAc...) asparagine glycans are attached at residues asparagine 37 and asparagine 78. Residues histidine 82 and histidine 84 each coordinate Cu cation. An N-linked (GlcNAc...) asparagine glycan is attached at asparagine 114. Histidine 127 and histidine 129 together coordinate Cu cation. 9 N-linked (GlcNAc...) asparagine glycosylation sites follow: asparagine 187, asparagine 296, asparagine 323, asparagine 330, asparagine 373, asparagine 383, asparagine 400, asparagine 418, and asparagine 441. In terms of domain architecture, Plastocyanin-like 3 spans aspartate 408 to lysine 542. The Cu cation site is built by histidine 459, histidine 462, and histidine 464. The N-linked (GlcNAc...) asparagine glycan is linked to asparagine 479. Cu cation-binding residues include histidine 521, cysteine 522, histidine 523, and histidine 527. Asparagine 545 is a glycosylation site (N-linked (GlcNAc...) asparagine).

Belongs to the multicopper oxidase family. Requires Cu cation as cofactor. Ubiquitous, with higher levels in the inflorescence stem.

It localises to the secreted. It is found in the extracellular space. Its subcellular location is the apoplast. It carries out the reaction 4 hydroquinone + O2 = 4 benzosemiquinone + 2 H2O. Lignin degradation and detoxification of lignin-derived products. Required for secondary xylem cell wall lignification. The sequence is that of Laccase-4 (IRX12) from Arabidopsis thaliana (Mouse-ear cress).